A 307-amino-acid chain; its full sequence is Ornithine carbamoyltransferase (307 aa).

Carbamoyl phosphate-binding positions include 50–53 (STRT), Gln-77, Arg-101, and 128–131 (HPCQ). Residues Asn-160, Asp-224, and 228–229 (SM) contribute to the L-ornithine site. Residues 264–265 (CL) and Arg-292 each bind carbamoyl phosphate.

The protein belongs to the aspartate/ornithine carbamoyltransferase superfamily. OTCase family. Homotrimer.

Its subcellular location is the cytoplasm. It catalyses the reaction carbamoyl phosphate + L-ornithine = L-citrulline + phosphate + H(+). Its pathway is amino-acid biosynthesis; L-arginine biosynthesis; L-arginine from L-ornithine and carbamoyl phosphate: step 1/3. Its function is as follows. Reversibly catalyzes the transfer of the carbamoyl group from carbamoyl phosphate (CP) to the N(epsilon) atom of ornithine (ORN) to produce L-citrulline, which is a substrate for argininosuccinate synthetase, the enzyme involved in the final step in arginine biosynthesis. This Mycobacterium bovis (strain ATCC BAA-935 / AF2122/97) protein is Ornithine carbamoyltransferase (argF).